Here is a 433-residue protein sequence, read N- to C-terminus: D-amino acid dehydrogenase (433 aa).

An FAD-binding site is contributed by 3–17 (VLVLGSGVIGTTSAY).

This sequence belongs to the DadA oxidoreductase family. It depends on FAD as a cofactor.

It carries out the reaction a D-alpha-amino acid + A + H2O = a 2-oxocarboxylate + AH2 + NH4(+). It functions in the pathway amino-acid degradation; D-alanine degradation; NH(3) and pyruvate from D-alanine: step 1/1. Its function is as follows. Oxidative deamination of D-amino acids. The sequence is that of D-amino acid dehydrogenase from Pseudomonas savastanoi pv. phaseolicola (strain 1448A / Race 6) (Pseudomonas syringae pv. phaseolicola (strain 1448A / Race 6)).